Reading from the N-terminus, the 200-residue chain is NADH-quinone oxidoreductase subunit C (200 aa).

The protein belongs to the complex I 30 kDa subunit family. As to quaternary structure, NDH-1 is composed of 14 different subunits. Subunits NuoB, C, D, E, F, and G constitute the peripheral sector of the complex.

The protein localises to the cell inner membrane. The enzyme catalyses a quinone + NADH + 5 H(+)(in) = a quinol + NAD(+) + 4 H(+)(out). NDH-1 shuttles electrons from NADH, via FMN and iron-sulfur (Fe-S) centers, to quinones in the respiratory chain. The immediate electron acceptor for the enzyme in this species is believed to be ubiquinone. Couples the redox reaction to proton translocation (for every two electrons transferred, four hydrogen ions are translocated across the cytoplasmic membrane), and thus conserves the redox energy in a proton gradient. This chain is NADH-quinone oxidoreductase subunit C, found in Rhizobium rhizogenes (strain K84 / ATCC BAA-868) (Agrobacterium radiobacter).